A 350-amino-acid chain; its full sequence is UDP-glucose 4-epimerase GEPI48 (350 aa).

5–36 (TVLVTGGAGYIGSHTVLQLLLGGFKAVVVDNL) is an NAD(+) binding site. Serine 130 contacts substrate. The Proton acceptor role is filled by tyrosine 154.

This sequence belongs to the NAD(P)-dependent epimerase/dehydratase family. Requires NAD(+) as cofactor.

The catalysed reaction is UDP-alpha-D-glucose = UDP-alpha-D-galactose. Its pathway is carbohydrate metabolism; galactose metabolism. The protein is UDP-glucose 4-epimerase GEPI48 of Cyamopsis tetragonoloba (Guar).